Consider the following 117-residue polypeptide: Ribonuclease P protein component (117 aa).

Belongs to the RnpA family. In terms of assembly, consists of a catalytic RNA component (M1 or rnpB) and a protein subunit.

It catalyses the reaction Endonucleolytic cleavage of RNA, removing 5'-extranucleotides from tRNA precursor.. RNaseP catalyzes the removal of the 5'-leader sequence from pre-tRNA to produce the mature 5'-terminus. It can also cleave other RNA substrates such as 4.5S RNA. The protein component plays an auxiliary but essential role in vivo by binding to the 5'-leader sequence and broadening the substrate specificity of the ribozyme. This is Ribonuclease P protein component from Aliivibrio fischeri (strain ATCC 700601 / ES114) (Vibrio fischeri).